A 72-amino-acid chain; its full sequence is NAD(P)H-quinone oxidoreductase subunit O (72 aa).

The protein belongs to the complex I NdhO subunit family. In terms of assembly, NDH-1 can be composed of about 15 different subunits; different subcomplexes with different compositions have been identified which probably have different functions.

The protein resides in the cellular thylakoid membrane. The catalysed reaction is a plastoquinone + NADH + (n+1) H(+)(in) = a plastoquinol + NAD(+) + n H(+)(out). The enzyme catalyses a plastoquinone + NADPH + (n+1) H(+)(in) = a plastoquinol + NADP(+) + n H(+)(out). NDH-1 shuttles electrons from an unknown electron donor, via FMN and iron-sulfur (Fe-S) centers, to quinones in the respiratory and/or the photosynthetic chain. The immediate electron acceptor for the enzyme in this species is believed to be plastoquinone. Couples the redox reaction to proton translocation, and thus conserves the redox energy in a proton gradient. Cyanobacterial NDH-1 also plays a role in inorganic carbon-concentration. This chain is NAD(P)H-quinone oxidoreductase subunit O, found in Synechococcus elongatus (strain ATCC 33912 / PCC 7942 / FACHB-805) (Anacystis nidulans R2).